The following is a 321-amino-acid chain: Aspartate carbamoyltransferase catalytic subunit (321 aa).

The carbamoyl phosphate site is built by R65 and T66. K93 provides a ligand contact to L-aspartate. 3 residues coordinate carbamoyl phosphate: R115, H143, and Q146. Residues R176 and R230 each contribute to the L-aspartate site. Carbamoyl phosphate is bound by residues G271 and P272.

It belongs to the aspartate/ornithine carbamoyltransferase superfamily. ATCase family. Heterododecamer (2C3:3R2) of six catalytic PyrB chains organized as two trimers (C3), and six regulatory PyrI chains organized as three dimers (R2).

It catalyses the reaction carbamoyl phosphate + L-aspartate = N-carbamoyl-L-aspartate + phosphate + H(+). The protein operates within pyrimidine metabolism; UMP biosynthesis via de novo pathway; (S)-dihydroorotate from bicarbonate: step 2/3. Its function is as follows. Catalyzes the condensation of carbamoyl phosphate and aspartate to form carbamoyl aspartate and inorganic phosphate, the committed step in the de novo pyrimidine nucleotide biosynthesis pathway. The sequence is that of Aspartate carbamoyltransferase catalytic subunit from Bartonella henselae (strain ATCC 49882 / DSM 28221 / CCUG 30454 / Houston 1) (Rochalimaea henselae).